A 474-amino-acid chain; its full sequence is L-arabinose isomerase (474 aa).

Positions 306, 331, 348, and 447 each coordinate Mn(2+).

It belongs to the arabinose isomerase family. It depends on Mn(2+) as a cofactor.

The enzyme catalyses beta-L-arabinopyranose = L-ribulose. The protein operates within carbohydrate degradation; L-arabinose degradation via L-ribulose; D-xylulose 5-phosphate from L-arabinose (bacterial route): step 1/3. Its function is as follows. Catalyzes the conversion of L-arabinose to L-ribulose. The protein is L-arabinose isomerase of Pediococcus pentosaceus (strain ATCC 25745 / CCUG 21536 / LMG 10740 / 183-1w).